Consider the following 441-residue polypeptide: Serine/threonine-protein kinase prk-2 (441 aa).

In terms of domain architecture, Protein kinase spans 31-285; it reads YKLKAELGRG…LEAILNHPWV (255 aa). Residues 37-45 and lysine 60 each bind ATP; that span reads LGRGGFGVV. Aspartate 158 functions as the Proton acceptor in the catalytic mechanism. The segment at 301-364 is disordered; sequence QKKTSESSDD…NQKKPNHKEF (64 aa). Residues 303–320 show a composition bias toward basic and acidic residues; the sequence is KTSESSDDHHSETLGDHS. Polar residues predominate over residues 328-338; it reads PPTSSVSQQPG.

Belongs to the protein kinase superfamily. Ser/Thr protein kinase family. PIM subfamily. Mg(2+) serves as cofactor.

It catalyses the reaction L-seryl-[protein] + ATP = O-phospho-L-seryl-[protein] + ADP + H(+). It carries out the reaction L-threonyl-[protein] + ATP = O-phospho-L-threonyl-[protein] + ADP + H(+). Functionally, involved in the negative regulation of synaptic differentiation in PLM neurons. The protein is Serine/threonine-protein kinase prk-2 of Caenorhabditis elegans.